The chain runs to 100 residues: Large ribosomal subunit protein uL23 (100 aa).

Belongs to the universal ribosomal protein uL23 family. Part of the 50S ribosomal subunit. Contacts protein L29, and trigger factor when it is bound to the ribosome.

Its function is as follows. One of the early assembly proteins it binds 23S rRNA. One of the proteins that surrounds the polypeptide exit tunnel on the outside of the ribosome. Forms the main docking site for trigger factor binding to the ribosome. The polypeptide is Large ribosomal subunit protein uL23 (Vibrio campbellii (strain ATCC BAA-1116)).